The primary structure comprises 472 residues: F420-non-reducing hydrogenase subunit A (472 aa).

Ni(2+) is bound by residues Cys-61, Cys-64, Cys-442, and Cys-445.

The protein belongs to the [NiFe]/[NiFeSe] hydrogenase large subunit family. The F420-non-reducing hydrogenase is composed of three subunits; MvhA, MvhD and MvhG. It forms a complex with the heterodisulfide reductase (hdr). The cofactor is Ni(2+).

Functionally, part of a complex that provides reducing equivalents for heterodisulfide reductase. This Methanothermobacter marburgensis (strain ATCC BAA-927 / DSM 2133 / JCM 14651 / NBRC 100331 / OCM 82 / Marburg) (Methanobacterium thermoautotrophicum) protein is F420-non-reducing hydrogenase subunit A (mvhA).